The following is an 836-amino-acid chain: Neuroligin-2 (836 aa).

Residues 1–14 (MWLLALCLVGLAGA) form the signal peptide. At 15–678 (QRGGGGPGGG…DSRDYSTELS (664 aa)) the chain is on the extracellular side. Residues N98 and N136 are each glycosylated (N-linked (GlcNAc...) asparagine). 3 cysteine pairs are disulfide-bonded: C106-C141, C317-C328, and C487-C521. N-linked (GlcNAc...) asparagine glycosylation is present at N522. Residues 623-661 (PPYATRWPPRTPGPGTSGTRRPPPPATLPPESDIDLGPR) are disordered. The chain crosses the membrane as a helical span at residues 679-699 (VTVAVGASLLFLNILAFAALY). A required for interaction with LHFPL4 region spans residues 679-699 (VTVAVGASLLFLNILAFAALY). At 700–836 (YKRDRRQELR…LPHPHSTTRV (137 aa)) the chain is on the cytoplasmic side. Disordered stretches follow at residues 711–735 (RRLSPPGGSGSGVPGGGPLLPTAGR) and 791–836 (LLPS…TTRV). S714 and S719 each carry phosphoserine. A compositionally biased stretch (gly residues) spans 717–728 (GGSGSGVPGGGP). Pro residues predominate over residues 796–819 (LGPPPPPPPPSLHPFGPFPPPPPT). Polar residues predominate over residues 824–836 (NNTLPHPHSTTRV).

It belongs to the type-B carboxylesterase/lipase family. Interacts with neurexins NRXN1, NRXN2 and NRXN3. Interaction with neurexins is mediated by heparan sulfate glycan modification on neurexin. Interacts (via its C-terminus) with DLG4/PSD-95 (via PDZ domain 3). Interacts with PATJ. Interacts with GPHN. Interacts with MDGA1 and MDGA2. Found in a complex with MAGI2 and IGSF9B, where it interacts with MAGI2 (via WW 1, WW 2 and PDZ 2 domains). Identified in a complex of 720 kDa composed of LHFPL4, NLGN2, GABRA1, GABRB2, GABRG2 and GABRB3. Interacts with LHFPL4; leading to mutual regulation of the protein level and synaptic clustering. Interacts with GABRA1. As to expression, detected on hippocampus neurons, especially at inhibitory synapses. Detected in retina, in the outer and inner plexiform layer. Detected in pancreas, in islet of Langerhans beta cells (at protein level). Expressed in brain, spinal cord and dorsal root ganglion. Detected in brain, and at lower levels in pancreas islet beta cells.

Its subcellular location is the cell membrane. The protein localises to the postsynaptic cell membrane. It localises to the presynaptic cell membrane. Functionally, transmembrane scaffolding protein involved in cell-cell interactions via its interactions with neurexin family members. Mediates cell-cell interactions both in neurons and in other types of cells, such as Langerhans beta cells. Plays a role in synapse function and synaptic signal transmission, especially via gamma-aminobutyric acid receptors (GABA(A) receptors). Functions by recruiting and clustering synaptic proteins. Promotes clustering of postsynaptic GABRG2 and GPHN. Promotes clustering of postsynaptic LHFPL4. Modulates signaling by inhibitory synapses, and thereby plays a role in controlling the ratio of signaling by excitatory and inhibitory synapses and information processing. Required for normal signal amplitude from inhibitory synapses, but is not essential for normal signal frequency. May promote the initial formation of synapses, but is not essential for this. In vitro, triggers the de novo formation of presynaptic structures. Mediates cell-cell interactions between Langerhans beta cells and modulates insulin secretion. The chain is Neuroligin-2 (Nlgn2) from Rattus norvegicus (Rat).